The primary structure comprises 584 residues: J protein JJJ2 (584 aa).

The region spanning 13–77 (TYYSILGLTS…DQKLRYDRDL (65 aa)) is the J domain. Residues 216–312 (YSEDPNSCLG…FSSGSHDSNL (97 aa)) are disordered. Serine 229 is subject to Phosphoserine. Residues 241 to 253 (QQQQQQQQQQQQQ) are compositionally biased toward low complexity. Residues 269 to 282 (KDNKESKRESRVSP) show a composition bias toward basic and acidic residues. Polar residues predominate over residues 299 to 312 (KTSTFSSGSHDSNL).

The protein resides in the cytoplasm. The protein localises to the nucleus. The protein is J protein JJJ2 (JJJ2) of Saccharomyces cerevisiae (strain YJM789) (Baker's yeast).